We begin with the raw amino-acid sequence, 453 residues long: Transcription factor radR (453 aa).

The segment covering 1-30 has biased composition (polar residues); it reads MPNNLQHQEGSYSLRSSNDVSPADDWTQTN. The segment at 1-45 is disordered; sequence MPNNLQHQEGSYSLRSSNDVSPADDWTQTNDPKEKKRIQNRVAQR. Positions 30–62 constitute a bZIP domain; sequence NDPKEKKRIQNRVAQRTYRNRIRARLEELENKI. The tract at residues 33 to 50 is basic motif; sequence KEKKRIQNRVAQRTYRNR. Residues 51-58 are leucine-zipper; the sequence is IRARLEEL. The segment at 160-184 is disordered; that stretch reads APRAAQARSIAPTSTGMHQISPSYG. The span at 170-181 shows a compositional bias: polar residues; sequence APTSTGMHQISP.

Belongs to the bZIP family.

Its subcellular location is the nucleus. Its function is as follows. Transcription factor that positively regulates the expression of the gene clusters that mediate the biosynthesis of pestheic acid, a diphenyl ether which is a biosynthetic precursor of the unique chloropupukeananes. This is Transcription factor radR from Floropilus chiversii (Chaetomium chiversii).